The chain runs to 652 residues: Serine/threonine-protein kinase ssp1 (652 aa).

Phosphotyrosine is present on Tyr-58. A Phosphoserine modification is found at Ser-59. Tyr-63 carries the phosphotyrosine modification. Residues 135-409 (YEIIKELGRG…LVEVKLHPWT (275 aa)) enclose the Protein kinase domain. Residues 141–149 (LGRGMHGKV) and Lys-164 contribute to the ATP site. The Proton acceptor role is filled by Asp-267. Disordered regions lie at residues 467–491 (DSSSSVPSDSSICRPESSGNSSIGL) and 506–529 (NESQKDRERKQVHPVEMGRNSSEK). A compositionally biased stretch (basic and acidic residues) spans 508 to 518 (SQKDRERKQVH).

This sequence belongs to the protein kinase superfamily. Ser/Thr protein kinase family.

It is found in the cytoplasm. It catalyses the reaction L-seryl-[protein] + ATP = O-phospho-L-seryl-[protein] + ADP + H(+). The catalysed reaction is L-threonyl-[protein] + ATP = O-phospho-L-threonyl-[protein] + ADP + H(+). Functionally, involved in actin localization and thus in polarized cell growth. The polypeptide is Serine/threonine-protein kinase ssp1 (ssp1) (Schizosaccharomyces pombe (strain 972 / ATCC 24843) (Fission yeast)).